Reading from the N-terminus, the 1197-residue chain is Protein timeless homolog (1197 aa).

A required for homodimerization and for interaction with CRY1 and CHEK1 region spans residues M1 to S309. The residue at position 281 (S281) is a Phosphoserine. 2 disordered regions span residues S647–Q674 and R943–N1002. A compositionally biased stretch (acidic residues) spans P656–L673. Positions S810 to S949 are DNA-binding domain. The span at Q963 to E985 shows a compositional bias: acidic residues. Over residues G986 to S999 the composition is skewed to low complexity. An interaction with PARP1 region spans residues S997 to L1095. Phosphoserine occurs at positions 1071 and 1084. Residues I1079–D1197 are required for nuclear localization. A Phosphothreonine modification is found at T1086. A disordered region spans residues L1088 to D1197. Composition is skewed to acidic residues over residues E1099–E1109 and T1143–W1153. S1165 carries the phosphoserine modification.

It belongs to the timeless family. As to quaternary structure, monomer. Homodimer or homomultimer. Component of the circadian core oscillator, which includes the CRY proteins, CLOCK or NPAS2, ARTNL/BMAL1 or ARTNL2/BMAL2, CSKN1D and/or CSNK1E, TIMELESS, and the PER proteins. Interacts directly with PER2; the interaction with PER2 is via its second PAS domain. Interacts directly with PER1 and PER3. Interacts with CRY1. Interacts with CRY2. Interacts with CHEK1, ATR and ATRIP. Interacts with CLSPN. Interacts (via N-terminus) with TIPIN. The TIMELESS-TIPIN heterodimer binds preferably to guanine-rich quadruplex-forming (G4) DNA structures. Associates with the MCM2-7 complex. Interacts with DNA polymerases alpha, delta and epsilon. Interacts with DDX11; this interaction increases recruitment of both proteins onto chromatin in response to replication stress induction by hydroxyurea. Interacts with PARP1; interaction is direct and independent of poly-ADP-ribose. In terms of tissue distribution, predominantly and robustly expressed in proliferative organs (spleen, thymus, intestine and testis) compared to those more differentiated such as kidney and liver (at protein level). Expressed in all tissues examined including brain, heart, lung, liver, skeletal muscle, kidney, placenta, pancreas, spleen, thymus and testis. Strongly expressed in the suprachiasmatic nucleus (SCN) and pars tuberalis, moderately in the cingulate cortex, pyrimidal cell layer of the piriform cortex, periventricular part of the caudate putamen, and granular layer of the cerebellum, and weakly in the cerebral cortex, gyrus dentatus, hippocampus and thalamic nuclei. In embryonic kidney, expression is highest in regions of active ureteric bud cell branching.

It localises to the nucleus. Its subcellular location is the chromosome. In terms of biological role, plays an important role in the control of DNA replication, maintenance of replication fork stability, maintenance of genome stability throughout normal DNA replication, DNA repair and in the regulation of the circadian clock. Required to stabilize replication forks during DNA replication by forming a complex with TIPIN: this complex regulates DNA replication processes under both normal and stress conditions, stabilizes replication forks and influences both CHEK1 phosphorylation and the intra-S phase checkpoint in response to genotoxic stress. During DNA replication, inhibits the CMG complex ATPase activity and activates DNA polymerases catalytic activities, coupling DNA unwinding and DNA synthesis. TIMELESS promotes TIPIN nuclear localization. Plays a role in maintaining processive DNA replication past genomic guanine-rich DNA sequences that form G-quadruplex (G4) structures, possibly together with DDX1. Involved in cell survival after DNA damage or replication stress by promoting DNA repair. In response to double-strand breaks (DSBs), accumulates at DNA damage sites and promotes homologous recombination repair via its interaction with PARP1. May be specifically required for the ATR-CHEK1 pathway in the replication checkpoint induced by hydroxyurea or ultraviolet light. Involved in the determination of period length and in the DNA damage-dependent phase advancing of the circadian clock. Negatively regulates CLOCK|NPAS2-ARTNL/BMAL1|ARTNL2/BMAL2-induced transactivation of PER1 possibly via translocation of PER1 into the nucleus. May also play an important role in epithelial cell morphogenesis and formation of branching tubules. The sequence is that of Protein timeless homolog from Mus musculus (Mouse).